Here is a 564-residue protein sequence, read N- to C-terminus: Probable beta-glucosidase btgE (564 aa).

Residues 1 to 18 (MRGAFLATAAAIAGTAMA) form the signal peptide. The tract at residues 285–304 (ATSSVAPSSSPSKPAAPSGA) is disordered. Residue Asn404 is glycosylated (N-linked (GlcNAc...) asparagine). Glu405 serves as the catalytic Proton donor. Glu501 (nucleophile) is an active-site residue.

The protein belongs to the glycosyl hydrolase 17 family.

It localises to the secreted. The protein resides in the cell wall. The enzyme catalyses Hydrolysis of terminal, non-reducing beta-D-glucosyl residues with release of beta-D-glucose.. The protein operates within glycan metabolism; cellulose degradation. Its function is as follows. Beta-glucosidases are one of a number of cellulolytic enzymes involved in the degradation of cellulosic biomass. Catalyzes the last step releasing glucose from the inhibitory cellobiose. In Aspergillus clavatus (strain ATCC 1007 / CBS 513.65 / DSM 816 / NCTC 3887 / NRRL 1 / QM 1276 / 107), this protein is Probable beta-glucosidase btgE (btgE).